Here is a 202-residue protein sequence, read N- to C-terminus: Riboflavin synthase (202 aa).

2 Lumazine-binding repeats span residues 1 to 101 and 102 to 198; these read MFTG…MGGH and LVFG…ARLA. 2,4-dihydroxypteridine-binding positions include 4–6, 47–49, 66–68, 105–107, Lys140, 149–151, and 163–168; these read GII, CLT, EAW, GHV, SLT, and LLIRHS.

In terms of assembly, homotrimer.

It catalyses the reaction 2 6,7-dimethyl-8-(1-D-ribityl)lumazine + H(+) = 5-amino-6-(D-ribitylamino)uracil + riboflavin. Its pathway is cofactor biosynthesis; riboflavin biosynthesis; riboflavin from 2-hydroxy-3-oxobutyl phosphate and 5-amino-6-(D-ribitylamino)uracil: step 2/2. With respect to regulation, is inhibited by riboflavin. Product inhibition may be the major mechanism by which RS regulates its enzymatic activity in vivo. Functionally, catalyzes the dismutation of two molecules of 6,7-dimethyl-8-ribityllumazine, resulting in the formation of riboflavin and 5-amino-6-(D-ribitylamino)uracil. The protein is Riboflavin synthase of Brucella abortus (strain 2308).